The sequence spans 534 residues: Benzaldehyde dehydrogenase, mitochondrial (534 aa).

Residues 1-29 (MAAHRFSSLLSRSVPLLSRGGKQSYLGRG) constitute a mitochondrion transit peptide. Residues 199–202 (IPWN), 225–228 (KTAE), 258–259 (GP), 278–279 (GS), and 301–303 (ELG) contribute to the NAD(+) site. Catalysis depends on E301, which acts as the Proton acceptor. The active-site Nucleophile is C335. NAD(+) contacts are provided by residues 381–385 (DQFEK) and 432–434 (EIF).

Belongs to the aldehyde dehydrogenase family. In terms of assembly, homotetramer. Expressed predominantly in the upper and lower flower petal lobes, and, at low levels, in flower tubes, pistils, stamens and sepals.

The protein localises to the mitochondrion. It carries out the reaction an aldehyde + NAD(+) + H2O = a carboxylate + NADH + 2 H(+). The catalysed reaction is acetaldehyde + NAD(+) + H2O = acetate + NADH + 2 H(+). The enzyme catalyses benzaldehyde + NAD(+) + H2O = benzoate + NADH + 2 H(+). It catalyses the reaction 2-phenylacetaldehyde + NAD(+) + H2O = 2-phenylacetate + NADH + 2 H(+). The protein operates within aromatic compound metabolism. Its activity is regulated as follows. Inhibited by disulfiram. Functionally, component of the floral volatile benzenoid/phenylpropanoid (FVBP) biosynthetic pathway. Catalyzes the oxidation of benzaldehyde to benzoic acid (BA). Capable of oxidizing a broad spectrum of aliphatic aldehydes; increased carbon chain length results in a decrease in its efficiency. In Antirrhinum majus (Garden snapdragon), this protein is Benzaldehyde dehydrogenase, mitochondrial.